Consider the following 262-residue polypeptide: Cytochrome c oxidase subunit 3 (262 aa).

The next 6 helical transmembrane spans lie at 39–59 (YTMTLFILGNVITILTMYQWW), 83–103 (GMILFIVSEVFFFISFFWAFF), 120–140 (VGIAAFNPFQIPLLNTAILLA), 163–183 (GLFFTIVLGVYFTILQAYEYI), 201–221 (ATGFHGLHVLIGTTFLLICFL), and 240–260 (AWYWHFVDVVWLFLYITIYWW).

It belongs to the cytochrome c oxidase subunit 3 family. In terms of assembly, component of the cytochrome c oxidase (complex IV, CIV), a multisubunit enzyme composed of a catalytic core of 3 subunits and several supernumerary subunits. The complex exists as a monomer or a dimer and forms supercomplexes (SCs) in the inner mitochondrial membrane with ubiquinol-cytochrome c oxidoreductase (cytochrome b-c1 complex, complex III, CIII).

Its subcellular location is the mitochondrion inner membrane. The catalysed reaction is 4 Fe(II)-[cytochrome c] + O2 + 8 H(+)(in) = 4 Fe(III)-[cytochrome c] + 2 H2O + 4 H(+)(out). Functionally, component of the cytochrome c oxidase, the last enzyme in the mitochondrial electron transport chain which drives oxidative phosphorylation. The respiratory chain contains 3 multisubunit complexes succinate dehydrogenase (complex II, CII), ubiquinol-cytochrome c oxidoreductase (cytochrome b-c1 complex, complex III, CIII) and cytochrome c oxidase (complex IV, CIV), that cooperate to transfer electrons derived from NADH and succinate to molecular oxygen, creating an electrochemical gradient over the inner membrane that drives transmembrane transport and the ATP synthase. Cytochrome c oxidase is the component of the respiratory chain that catalyzes the reduction of oxygen to water. Electrons originating from reduced cytochrome c in the intermembrane space (IMS) are transferred via the dinuclear copper A center (CU(A)) of subunit 2 and heme A of subunit 1 to the active site in subunit 1, a binuclear center (BNC) formed by heme A3 and copper B (CU(B)). The BNC reduces molecular oxygen to 2 water molecules using 4 electrons from cytochrome c in the IMS and 4 protons from the mitochondrial matrix. The sequence is that of Cytochrome c oxidase subunit 3 (COIII) from Anopheles gambiae (African malaria mosquito).